The chain runs to 477 residues: Solute carrier family 2, facilitated glucose transporter member 8 (477 aa).

Topologically, residues methionine 1–arginine 25 are cytoplasmic. A Dileucine internalization motif motif is present at residues leucine 12–leucine 13. Residues valine 26–tyrosine 46 traverse the membrane as a helical segment. The Extracellular portion of the chain corresponds to serine 47–serine 70. A helical membrane pass occupies residues tryptophan 71–leucine 91. Over aspartate 92–arginine 96 the chain is Cytoplasmic. The helical transmembrane segment at lysine 97–alanine 117 threads the bilayer. The Extracellular portion of the chain corresponds to arginine 118–arginine 127. The chain crosses the membrane as a helical span at residues leucine 128–isoleucine 148. Topologically, residues alanine 149–leucine 156 are cytoplasmic. The helical transmembrane segment at leucine 157–tryptophan 177 threads the bilayer. A D-glucose-binding site is contributed by glutamine 162. Residues valine 178 to arginine 182 are Extracellular-facing. A helical transmembrane segment spans residues tryptophan 183–proline 203. At glutamate 204–proline 257 the chain is on the cytoplasmic side. Residues leucine 258 to phenylalanine 278 form a helical membrane-spanning segment. Residues glutamine 268–glutamine 269 and asparagine 274 each bind D-glucose. Topologically, residues tyrosine 279–serine 293 are extracellular. A helical membrane pass occupies residues leucine 294–methionine 314. Over aspartate 315–arginine 320 the chain is Cytoplasmic. The chain crosses the membrane as a helical span at residues leucine 321 to phenylalanine 341. The Extracellular portion of the chain corresponds to lysine 342 to glutamine 367. An N-linked (GlcNAc...) asparagine glycan is attached at asparagine 350. Residues valine 368–glycine 388 form a helical membrane-spanning segment. At tryptophan 389–histidine 404 the chain is on the cytoplasmic side. Tryptophan 394 contacts D-glucose. Residues valine 405 to threonine 425 traverse the membrane as a helical segment. Over lysine 426–tyrosine 438 the chain is Extracellular. A helical transmembrane segment spans residues glycine 439–valine 459. The Cytoplasmic portion of the chain corresponds to proline 460–arginine 477.

It belongs to the major facilitator superfamily. Sugar transporter (TC 2.A.1.1) family. Glucose transporter subfamily. In terms of assembly, interacts with AP2B1. Also able to mediate the transport of dehydroascorbate. In terms of tissue distribution, highest level of expression in placenta and testis. Highly expressed in adult and pubertal testis, but not prepubertal testis. Lower levels of expression in brain, liver, heart, kidney, fat and skeletal muscle.

The protein localises to the cell membrane. It localises to the cytoplasmic vesicle membrane. It carries out the reaction D-glucose(out) = D-glucose(in). The catalysed reaction is D-fructose(out) = D-fructose(in). The enzyme catalyses L-dehydroascorbate(out) = L-dehydroascorbate(in). It catalyses the reaction alpha,alpha-trehalose(in) = alpha,alpha-trehalose(out). Its activity is regulated as follows. Inhibited by cytochalasin B. In terms of biological role, insulin-regulated facilitative hexose transporter that mediates the transport of glucose and fructose. Facilitates hepatic influx of dietary trehalose, which in turn inhibits glucose and fructose influx triggering a starvation signal and hepatic autophagy through activation of AMPK and ULK1. Also able to mediate the transport of dehydroascorbate. The chain is Solute carrier family 2, facilitated glucose transporter member 8 from Mus musculus (Mouse).